A 660-amino-acid chain; its full sequence is DNA primase (660 aa).

The CHC2-type zinc-finger motif lies at 40–64; sequence CPFHKEKTPSFTVSPDKQFYYCFGC. The tract at residues 94–115 is disordered; the sequence is GMEVPREQGRRDQKPRQPTDSP. Residues 97-110 show a composition bias toward basic and acidic residues; that stretch reads VPREQGRRDQKPRQ. One can recognise a Toprim domain in the interval 261–343; that stretch reads DEIIVVEGYM…GRRARFLFLP (83 aa). Glu-267, Asp-311, and Asp-313 together coordinate Mg(2+). 2 disordered regions span residues 425–449 and 476–519; these read DPQQVEQLAQQAPATSSMPDYDPGY and QAWK…APVE. The segment covering 428 to 442 has biased composition (polar residues); sequence QVEQLAQQAPATSSM. Over residues 488–498 the composition is skewed to basic and acidic residues; it reads PWSDKPWDKNR.

This sequence belongs to the DnaG primase family. Monomer. Interacts with DnaB. The cofactor is Zn(2+). Mg(2+) serves as cofactor.

The catalysed reaction is ssDNA + n NTP = ssDNA/pppN(pN)n-1 hybrid + (n-1) diphosphate.. In terms of biological role, RNA polymerase that catalyzes the synthesis of short RNA molecules used as primers for DNA polymerase during DNA replication. The chain is DNA primase from Pseudomonas putida (strain ATCC 47054 / DSM 6125 / CFBP 8728 / NCIMB 11950 / KT2440).